The sequence spans 210 residues: Large ribosomal subunit protein bL25 (210 aa).

The segment at 190–210 (LKSEGAEGGEAEAGQAEEGEE) is disordered. Over residues 196–210 (EGGEAEAGQAEEGEE) the composition is skewed to acidic residues.

This sequence belongs to the bacterial ribosomal protein bL25 family. CTC subfamily. As to quaternary structure, part of the 50S ribosomal subunit; part of the 5S rRNA/L5/L18/L25 subcomplex. Contacts the 5S rRNA. Binds to the 5S rRNA independently of L5 and L18.

In terms of biological role, this is one of the proteins that binds to the 5S RNA in the ribosome where it forms part of the central protuberance. This chain is Large ribosomal subunit protein bL25, found in Chelativorans sp. (strain BNC1).